A 292-amino-acid polypeptide reads, in one-letter code: NAD kinase (292 aa).

Asp-73 (proton acceptor) is an active-site residue. NAD(+)-binding positions include 73 to 74 (DG), 147 to 148 (NE), His-158, Arg-175, Asp-177, 188 to 193 (TAYSLS), and Gln-247.

Belongs to the NAD kinase family. A divalent metal cation is required as a cofactor.

It is found in the cytoplasm. It catalyses the reaction NAD(+) + ATP = ADP + NADP(+) + H(+). In terms of biological role, involved in the regulation of the intracellular balance of NAD and NADP, and is a key enzyme in the biosynthesis of NADP. Catalyzes specifically the phosphorylation on 2'-hydroxyl of the adenosine moiety of NAD to yield NADP. The sequence is that of NAD kinase from Photorhabdus laumondii subsp. laumondii (strain DSM 15139 / CIP 105565 / TT01) (Photorhabdus luminescens subsp. laumondii).